The following is a 329-amino-acid chain: E3 ubiquitin-protein ligase SINA-like 4 (329 aa).

The segment covering 1–12 has biased composition (basic and acidic residues); it reads MTKLGRRNDGGG. The segment at 1–58 is disordered; that stretch reads MTKLGRRNDGGGKSHRSSTKRQRRTSVSVDDPSPGEEEEKTLVVLTDDSDSEEDDKPL. Residues 13-24 are compositionally biased toward basic residues; that stretch reads KSHRSSTKRQRR. The segment at 86–122 adopts an RING-type; degenerate zinc-finger fold; that stretch reads CPNCFDPLKKPIFQCNNGHLACFLCCIKLKKRCSFCK. Positions 136 to 325 are SBD; sequence VIKAGLVSCS…MEISIGDKND (190 aa). The segment at 139–198 adopts an SIAH-type zinc-finger fold; it reads AGLVSCSNAIYGCKQSTTYGNQLQSHEKVCVFAPCSCPIKDCNYIGFYKDLINHFRATHK. Zn(2+) is bound by residues C144, C151, H164, C168, C175, C180, H192, and H197.

The protein belongs to the SINA (Seven in absentia) family.

The enzyme catalyses S-ubiquitinyl-[E2 ubiquitin-conjugating enzyme]-L-cysteine + [acceptor protein]-L-lysine = [E2 ubiquitin-conjugating enzyme]-L-cysteine + N(6)-ubiquitinyl-[acceptor protein]-L-lysine.. Its pathway is protein modification; protein ubiquitination. Functionally, E3 ubiquitin-protein ligase that mediates ubiquitination and subsequent proteasomal degradation of target proteins. E3 ubiquitin ligases accept ubiquitin from an E2 ubiquitin-conjugating enzyme in the form of a thioester and then directly transfers the ubiquitin to targeted substrates. It probably triggers the ubiquitin-mediated degradation of different substrates. This chain is E3 ubiquitin-protein ligase SINA-like 4, found in Arabidopsis thaliana (Mouse-ear cress).